A 1366-amino-acid polypeptide reads, in one-letter code: DNA-directed RNA polymerase subunit beta' (1366 aa).

The span at 1–20 (MTSSKPKKTSRVRKTTKNSK) shows a compositional bias: basic residues. The interval 1–33 (MTSSKPKKTSRVRKTTKNSKKNNPVTMPALAKT) is disordered. Cysteine 248, cysteine 315, cysteine 322, and cysteine 325 together coordinate Zn(2+). The interval 1291 to 1366 (YTVDMPQSPA…LQEEGLLSDE (76 aa)) is disordered. Residues 1354–1366 (LEGLQEEGLLSDE) show a composition bias toward low complexity.

The protein belongs to the RNA polymerase beta' chain family. RpoC2 subfamily. In terms of assembly, in cyanobacteria the RNAP catalytic core is composed of 2 alpha, 1 beta, 1 beta', 1 gamma and 1 omega subunit. When a sigma factor is associated with the core the holoenzyme is formed, which can initiate transcription. The cofactor is Zn(2+).

The enzyme catalyses RNA(n) + a ribonucleoside 5'-triphosphate = RNA(n+1) + diphosphate. In terms of biological role, DNA-dependent RNA polymerase catalyzes the transcription of DNA into RNA using the four ribonucleoside triphosphates as substrates. This chain is DNA-directed RNA polymerase subunit beta', found in Prochlorococcus marinus (strain AS9601).